We begin with the raw amino-acid sequence, 475 residues long: Aspartyl/glutamyl-tRNA(Asn/Gln) amidotransferase subunit B (475 aa).

This sequence belongs to the GatB/GatE family. GatB subfamily. As to quaternary structure, heterotrimer of A, B and C subunits.

The enzyme catalyses L-glutamyl-tRNA(Gln) + L-glutamine + ATP + H2O = L-glutaminyl-tRNA(Gln) + L-glutamate + ADP + phosphate + H(+). The catalysed reaction is L-aspartyl-tRNA(Asn) + L-glutamine + ATP + H2O = L-asparaginyl-tRNA(Asn) + L-glutamate + ADP + phosphate + 2 H(+). In terms of biological role, allows the formation of correctly charged Asn-tRNA(Asn) or Gln-tRNA(Gln) through the transamidation of misacylated Asp-tRNA(Asn) or Glu-tRNA(Gln) in organisms which lack either or both of asparaginyl-tRNA or glutaminyl-tRNA synthetases. The reaction takes place in the presence of glutamine and ATP through an activated phospho-Asp-tRNA(Asn) or phospho-Glu-tRNA(Gln). In Chlorobium limicola (strain DSM 245 / NBRC 103803 / 6330), this protein is Aspartyl/glutamyl-tRNA(Asn/Gln) amidotransferase subunit B.